The chain runs to 484 residues: Glutamate--tRNA ligase (484 aa).

The short motif at 11–21 is the 'HIGH' region element; it reads PSPTGLLHIGN. The 'KMSKS' region motif lies at 255–259; the sequence is KLSKR. Lys-258 lines the ATP pocket.

It belongs to the class-I aminoacyl-tRNA synthetase family. Glutamate--tRNA ligase type 1 subfamily. In terms of assembly, monomer.

It is found in the cytoplasm. The enzyme catalyses tRNA(Glu) + L-glutamate + ATP = L-glutamyl-tRNA(Glu) + AMP + diphosphate. In terms of biological role, catalyzes the attachment of glutamate to tRNA(Glu) in a two-step reaction: glutamate is first activated by ATP to form Glu-AMP and then transferred to the acceptor end of tRNA(Glu). The protein is Glutamate--tRNA ligase of Streptococcus agalactiae serotype Ia (strain ATCC 27591 / A909 / CDC SS700).